Reading from the N-terminus, the 269-residue chain is 3-deoxy-manno-octulosonate cytidylyltransferase (269 aa).

This sequence belongs to the KdsB family.

The protein resides in the cytoplasm. It catalyses the reaction 3-deoxy-alpha-D-manno-oct-2-ulosonate + CTP = CMP-3-deoxy-beta-D-manno-octulosonate + diphosphate. It participates in nucleotide-sugar biosynthesis; CMP-3-deoxy-D-manno-octulosonate biosynthesis; CMP-3-deoxy-D-manno-octulosonate from 3-deoxy-D-manno-octulosonate and CTP: step 1/1. It functions in the pathway bacterial outer membrane biogenesis; lipopolysaccharide biosynthesis. In terms of biological role, activates KDO (a required 8-carbon sugar) for incorporation into bacterial lipopolysaccharide in Gram-negative bacteria. This chain is 3-deoxy-manno-octulosonate cytidylyltransferase, found in Cupriavidus pinatubonensis (strain JMP 134 / LMG 1197) (Cupriavidus necator (strain JMP 134)).